A 191-amino-acid polypeptide reads, in one-letter code: Putative glutathione-dependent formaldehyde-activating enzyme (191 aa).

The 147-residue stretch at 20-166 folds into the CENP-V/GFA domain; that stretch reads FPGGNLYCKC…FHSLGLETYD (147 aa). 7 residues coordinate Zn(2+): Cys27, Cys29, Cys48, Cys50, Cys53, Cys95, and Cys98.

It belongs to the Gfa family. Requires Zn(2+) as cofactor.

It catalyses the reaction S-(hydroxymethyl)glutathione = glutathione + formaldehyde. The protein operates within one-carbon metabolism; formaldehyde degradation; formate from formaldehyde (glutathione route): step 1/3. In terms of biological role, catalyzes the condensation of formaldehyde and glutathione to S-hydroxymethylglutathione. This chain is Putative glutathione-dependent formaldehyde-activating enzyme, found in Aspergillus niger (strain ATCC MYA-4892 / CBS 513.88 / FGSC A1513).